Here is a 100-residue protein sequence, read N- to C-terminus: Bombyxin A-2 homolog (100 aa).

An N-terminal signal peptide occupies residues 1–18 (MRTQVLFLIVVLAVMASG). Disulfide bonds link cysteine 26-cysteine 85, cysteine 38-cysteine 98, and cysteine 84-cysteine 89. Positions 47-75 (PPYISSENEGYGWKWLERQRARQLDEARG) are cleaved as a propeptide — c peptide like.

It belongs to the insulin family. Heterodimer of a B chain and an A chain linked by two disulfide bonds.

Its subcellular location is the secreted. In terms of biological role, brain peptide responsible for activation of prothoracic glands to produce ecdysone in insects. The polypeptide is Bombyxin A-2 homolog (SBXA2) (Samia cynthia (Ailanthus silkmoth)).